A 1455-amino-acid chain; its full sequence is Cleavage and polyadenylation specificity factor subunit 1 (1455 aa).

This sequence belongs to the CPSF1 family. As to quaternary structure, component of the cleavage and polyadenylation specificity factor (CPSF) complex, composed of at least Clp, Cpsf73, Cpsf100 and Cpsf160.

Its subcellular location is the nucleus. Functionally, component of the cleavage and polyadenylation specificity factor (CPSF) complex that plays a key role in pre-mRNA 3'-end formation, recognizing the AAUAAA signal sequence and interacting with poly(A) polymerase and other factors to bring about cleavage and poly(A) addition. This subunit is involved in the RNA recognition step of the polyadenylation reaction. In Drosophila melanogaster (Fruit fly), this protein is Cleavage and polyadenylation specificity factor subunit 1 (Cpsf160).